A 268-amino-acid polypeptide reads, in one-letter code: 4-hydroxy-tetrahydrodipicolinate reductase (268 aa).

Residues 10 to 15 (GAGGRM), Asp-36, 99 to 101 (GTT), and 123 to 126 (APNM) each bind NAD(+). Catalysis depends on His-156, which acts as the Proton donor/acceptor. Residue His-157 coordinates (S)-2,3,4,5-tetrahydrodipicolinate. Residue Lys-160 is the Proton donor of the active site. (S)-2,3,4,5-tetrahydrodipicolinate is bound at residue 166–167 (GT).

This sequence belongs to the DapB family.

It is found in the cytoplasm. The enzyme catalyses (S)-2,3,4,5-tetrahydrodipicolinate + NAD(+) + H2O = (2S,4S)-4-hydroxy-2,3,4,5-tetrahydrodipicolinate + NADH + H(+). It carries out the reaction (S)-2,3,4,5-tetrahydrodipicolinate + NADP(+) + H2O = (2S,4S)-4-hydroxy-2,3,4,5-tetrahydrodipicolinate + NADPH + H(+). The protein operates within amino-acid biosynthesis; L-lysine biosynthesis via DAP pathway; (S)-tetrahydrodipicolinate from L-aspartate: step 4/4. Catalyzes the conversion of 4-hydroxy-tetrahydrodipicolinate (HTPA) to tetrahydrodipicolinate. The polypeptide is 4-hydroxy-tetrahydrodipicolinate reductase (Dechloromonas aromatica (strain RCB)).